The following is a 174-amino-acid chain: NADH-quinone oxidoreductase subunit B 1 (174 aa).

[4Fe-4S] cluster is bound by residues Cys53, Cys54, Cys118, and Cys148.

This sequence belongs to the complex I 20 kDa subunit family. NDH-1 is composed of 14 different subunits. Subunits NuoB, C, D, E, F, and G constitute the peripheral sector of the complex. [4Fe-4S] cluster is required as a cofactor.

It is found in the cell inner membrane. It carries out the reaction a quinone + NADH + 5 H(+)(in) = a quinol + NAD(+) + 4 H(+)(out). In terms of biological role, NDH-1 shuttles electrons from NADH, via FMN and iron-sulfur (Fe-S) centers, to quinones in the respiratory chain. The immediate electron acceptor for the enzyme in this species is believed to be ubiquinone. Couples the redox reaction to proton translocation (for every two electrons transferred, four hydrogen ions are translocated across the cytoplasmic membrane), and thus conserves the redox energy in a proton gradient. This is NADH-quinone oxidoreductase subunit B 1 from Cereibacter sphaeroides (strain KD131 / KCTC 12085) (Rhodobacter sphaeroides).